We begin with the raw amino-acid sequence, 856 residues long: Envelope glycoprotein gp160 (856 aa).

Positions 1–32 are cleaved as a signal peptide; the sequence is MRVKEKYQHLRRWGWRWGTMLLGMLMICSATE. Residues 33-684 lie on the Extracellular side of the membrane; that stretch reads KLWVTVYYGV…ITNWLWYIKI (652 aa). Residues Cys54 and Cys74 are joined by a disulfide bond. Residues Asn88, Asn136, Asn141, Asn156, Asn160, Asn186, Asn197, Asn230, Asn234, Asn241, Asn262, Asn276, Asn289, Asn295, Asn301, Asn332, Asn339, and Asn356 are each glycosylated (N-linked (GlcNAc...) asparagine; by host). Intrachain disulfides connect Cys119/Cys205, Cys126/Cys196, Cys131/Cys157, Cys218/Cys247, and Cys228/Cys239. A V1 region spans residues 131–156; the sequence is CTDLKNDTNTNSSSGGMIMEKGEIKN. The tract at residues 157-196 is V2; that stretch reads CSFNISTSIRGKVQKEYAFFYKHDIIPIDNDTTSYTLTSC. Residues 296–330 are V3; sequence CTRPNNNTRKRIRIQRGPGRTFVTIGKIGNMRQAH. Cys296 and Cys331 are disulfide-bonded. Positions 364 to 374 are CD4-binding loop; the sequence is SSGGDLEIVTH. Disulfide bonds link Cys378-Cys445 and Cys385-Cys418. Residues 385 to 418 are V4; that stretch reads CNSTQLFNSTWFNSTWSTEGSNNTEGSDTITLPC. N-linked (GlcNAc...) asparagine; by host glycosylation is found at Asn386, Asn392, Asn397, Asn406, Asn448, and Asn463. V5 regions lie at residues 461–471 and 463–471; these read NNNGSEIFRPG and NGSEIFRPG. The interval 512–532 is fusion peptide; it reads AVGIGALFLGFLGAAGSTMGA. The interval 574 to 592 is immunosuppression; that stretch reads KQLQARILAVERYLKDQQL. Cys598 and Cys604 are oxidised to a cystine. 5 N-linked (GlcNAc...) asparagine; by host glycosylation sites follow: Asn611, Asn616, Asn624, Asn637, and Asn674. The stretch at 633–667 forms a coiled coil; that stretch reads REINNYTSLIHSLIEESQNQQEKNEQELLELDKWA. Positions 662–683 are MPER; binding to GalCer; it reads ELDKWASLWNWFNITNWLWYIK. A helical transmembrane segment spans residues 685–705; it reads FIMIVGGLVGLRIVFAVLSIV. Residues 706 to 856 lie on the Cytoplasmic side of the membrane; that stretch reads NRVRQGHSPL…IRQGLERILL (151 aa). Residues 715 to 742 form a disordered region; it reads LSFQTHLPTPGGPDRPEGIEEEGGERDR. S-palmitoyl cysteine; by host attachment occurs at residues Cys764 and Cys837. The Di-leucine internalization motif signature appears at 855-856; that stretch reads LL.

Belongs to the HIV-1 env protein family. In terms of assembly, the mature envelope protein (Env) consists of a homotrimer of non-covalently associated gp120-gp41 heterodimers. The resulting complex protrudes from the virus surface as a spike. There seems to be as few as 10 spikes on the average virion. Interacts with host CD4, CCR5 and CXCR4. Gp120 also interacts with the C-type lectins CD209/DC-SIGN and CLEC4M/DC-SIGNR (collectively referred to as DC-SIGN(R)). Gp120 and gp41 interact with GalCer. Gp120 interacts with host ITGA4/ITGB7 complex; on CD4+ T-cells, this interaction results in rapid activation of integrin ITGAL/LFA-1, which facilitates efficient cell-to-cell spreading of HIV-1. Gp120 interacts with cell-associated heparan sulfate; this interaction increases virus infectivity on permissive cells and may be involved in infection of CD4- cells. As to quaternary structure, the mature envelope protein (Env) consists of a homotrimer of non-covalently associated gp120-gp41 heterodimers. The resulting complex protrudes from the virus surface as a spike. There seems to be as few as 10 spikes on the average virion. In terms of processing, highly glycosylated by host. The high number of glycan on the protein is reffered to as 'glycan shield' because it contributes to hide protein sequence from adaptive immune system. Post-translationally, palmitoylation of the transmembrane protein and of Env polyprotein (prior to its proteolytic cleavage) is essential for their association with host cell membrane lipid rafts. Palmitoylation is therefore required for envelope trafficking to classical lipid rafts, but not for viral replication. Specific enzymatic cleavages in vivo yield mature proteins. Envelope glycoproteins are synthesized as an inactive precursor that is heavily N-glycosylated and processed likely by host cell furin in the Golgi to yield the mature SU and TM proteins. The cleavage site between SU and TM requires the minimal sequence [KR]-X-[KR]-R. About 2 of the 9 disulfide bonds of gp41 are reduced by P4HB/PDI, following binding to CD4 receptor.

The protein localises to the virion membrane. It localises to the host cell membrane. It is found in the host endosome membrane. In terms of biological role, oligomerizes in the host endoplasmic reticulum into predominantly trimers. In a second time, gp160 transits in the host Golgi, where glycosylation is completed. The precursor is then proteolytically cleaved in the trans-Golgi and thereby activated by cellular furin or furin-like proteases to produce gp120 and gp41. Its function is as follows. Attaches the virus to the host lymphoid cell by binding to the primary receptor CD4. This interaction induces a structural rearrangement creating a high affinity binding site for a chemokine coreceptor like CXCR4 and/or CCR5. Acts as a ligand for CD209/DC-SIGN and CLEC4M/DC-SIGNR, which are respectively found on dendritic cells (DCs), and on endothelial cells of liver sinusoids and lymph node sinuses. These interactions allow capture of viral particles at mucosal surfaces by these cells and subsequent transmission to permissive cells. HIV subverts the migration properties of dendritic cells to gain access to CD4+ T-cells in lymph nodes. Virus transmission to permissive T-cells occurs either in trans (without DCs infection, through viral capture and transmission), or in cis (following DCs productive infection, through the usual CD4-gp120 interaction), thereby inducing a robust infection. In trans infection, bound virions remain infectious over days and it is proposed that they are not degraded, but protected in non-lysosomal acidic organelles within the DCs close to the cell membrane thus contributing to the viral infectious potential during DCs' migration from the periphery to the lymphoid tissues. On arrival at lymphoid tissues, intact virions recycle back to DCs' cell surface allowing virus transmission to CD4+ T-cells. Functionally, acts as a class I viral fusion protein. Under the current model, the protein has at least 3 conformational states: pre-fusion native state, pre-hairpin intermediate state, and post-fusion hairpin state. During fusion of viral and target intracellular membranes, the coiled coil regions (heptad repeats) assume a trimer-of-hairpins structure, positioning the fusion peptide in close proximity to the C-terminal region of the ectodomain. The formation of this structure appears to drive apposition and subsequent fusion of viral and target cell membranes. Complete fusion occurs in host cell endosomes and is dynamin-dependent, however some lipid transfer might occur at the plasma membrane. The virus undergoes clathrin-dependent internalization long before endosomal fusion, thus minimizing the surface exposure of conserved viral epitopes during fusion and reducing the efficacy of inhibitors targeting these epitopes. Membranes fusion leads to delivery of the nucleocapsid into the cytoplasm. This Homo sapiens (Human) protein is Envelope glycoprotein gp160.